A 154-amino-acid chain; its full sequence is 17 kDa surface antigen (154 aa).

The N-terminal stretch at 1-19 (MKLLSKIMIIALAASMLQA) is a signal peptide. Residue C20 is the site of N-palmitoyl cysteine attachment. The S-diacylglycerol cysteine moiety is linked to residue C20.

This sequence belongs to the rickettsiale 17 kDa surface antigen family.

The protein resides in the cell outer membrane. This Rickettsia rhipicephali protein is 17 kDa surface antigen (omp).